The following is a 305-amino-acid chain: Catechol 1,2-dioxygenase (305 aa).

The Fe cation site is built by Tyr-163, Tyr-197, His-221, and His-223.

This sequence belongs to the intradiol ring-cleavage dioxygenase family. In terms of assembly, homodimer. Fe(3+) is required as a cofactor.

It catalyses the reaction catechol + O2 = cis,cis-muconate + 2 H(+). It functions in the pathway aromatic compound metabolism; beta-ketoadipate pathway; 5-oxo-4,5-dihydro-2-furylacetate from catechol: step 1/3. The sequence is that of Catechol 1,2-dioxygenase (catA) from Acinetobacter guillouiae (Acinetobacter genomosp. 11).